Here is a 184-residue protein sequence, read N- to C-terminus: Ribosome-recycling factor (184 aa).

This sequence belongs to the RRF family.

It is found in the cytoplasm. In terms of biological role, responsible for the release of ribosomes from messenger RNA at the termination of protein biosynthesis. May increase the efficiency of translation by recycling ribosomes from one round of translation to another. The protein is Ribosome-recycling factor of Borrelia hermsii (strain HS1 / DAH).